A 188-amino-acid chain; its full sequence is Probable manganese efflux pump MntP (188 aa).

Helical transmembrane passes span 3–23 (ITAT…ASIG), 66–86 (LEWN…RMII), 106–128 (WLLV…GLAF), 143–163 (ATLI…SIIG), and 168–188 (ILGG…HFHG).

This sequence belongs to the MntP (TC 9.B.29) family.

The protein localises to the cell inner membrane. Its function is as follows. Probably functions as a manganese efflux pump. The sequence is that of Probable manganese efflux pump MntP from Escherichia coli O7:K1 (strain IAI39 / ExPEC).